A 426-amino-acid chain; its full sequence is 4-hydroxy-3-methylbut-2-en-1-yl diphosphate synthase (flavodoxin) (426 aa).

Residues 1-20 form a disordered region; it reads MLDRDLTLSDDAYESSPVSR. Residues cysteine 320, cysteine 323, cysteine 366, and glutamate 373 each contribute to the [4Fe-4S] cluster site.

Belongs to the IspG family. It depends on [4Fe-4S] cluster as a cofactor.

The catalysed reaction is (2E)-4-hydroxy-3-methylbut-2-enyl diphosphate + oxidized [flavodoxin] + H2O + 2 H(+) = 2-C-methyl-D-erythritol 2,4-cyclic diphosphate + reduced [flavodoxin]. The protein operates within isoprenoid biosynthesis; isopentenyl diphosphate biosynthesis via DXP pathway; isopentenyl diphosphate from 1-deoxy-D-xylulose 5-phosphate: step 5/6. In terms of biological role, converts 2C-methyl-D-erythritol 2,4-cyclodiphosphate (ME-2,4cPP) into 1-hydroxy-2-methyl-2-(E)-butenyl 4-diphosphate. The chain is 4-hydroxy-3-methylbut-2-en-1-yl diphosphate synthase (flavodoxin) from Wolbachia pipientis subsp. Culex pipiens (strain wPip).